The chain runs to 477 residues: Bifunctional protein HldE (477 aa).

The ribokinase stretch occupies residues 1–318 (MKVTLSEFER…ENAVRGRADT (318 aa)). K179 carries the N6-acetyllysine modification. 195–198 (NLSE) lines the ATP pocket. D264 is an active-site residue. The segment at 344–477 (MTNGVFDILH…IKKIQQDKKG (134 aa)) is cytidylyltransferase.

This sequence in the N-terminal section; belongs to the carbohydrate kinase PfkB family. The protein in the C-terminal section; belongs to the cytidylyltransferase family. In terms of assembly, homodimer.

It catalyses the reaction D-glycero-beta-D-manno-heptose 7-phosphate + ATP = D-glycero-beta-D-manno-heptose 1,7-bisphosphate + ADP + H(+). The catalysed reaction is D-glycero-beta-D-manno-heptose 1-phosphate + ATP + H(+) = ADP-D-glycero-beta-D-manno-heptose + diphosphate. Its pathway is nucleotide-sugar biosynthesis; ADP-L-glycero-beta-D-manno-heptose biosynthesis; ADP-L-glycero-beta-D-manno-heptose from D-glycero-beta-D-manno-heptose 7-phosphate: step 1/4. It functions in the pathway nucleotide-sugar biosynthesis; ADP-L-glycero-beta-D-manno-heptose biosynthesis; ADP-L-glycero-beta-D-manno-heptose from D-glycero-beta-D-manno-heptose 7-phosphate: step 3/4. Catalyzes the phosphorylation of D-glycero-D-manno-heptose 7-phosphate at the C-1 position to selectively form D-glycero-beta-D-manno-heptose-1,7-bisphosphate. Its function is as follows. Catalyzes the ADP transfer from ATP to D-glycero-beta-D-manno-heptose 1-phosphate, yielding ADP-D-glycero-beta-D-manno-heptose. The protein is Bifunctional protein HldE of Shigella boydii serotype 18 (strain CDC 3083-94 / BS512).